Reading from the N-terminus, the 150-residue chain is Putative esterase VC_A0580 (150 aa).

It belongs to the thioesterase PaaI family.

This Vibrio cholerae serotype O1 (strain ATCC 39315 / El Tor Inaba N16961) protein is Putative esterase VC_A0580.